A 303-amino-acid chain; its full sequence is Deoxyhypusine hydroxylase (303 aa).

An N-acetylmethionine modification is found at M1. HEAT-like PBS-type repeat units follow at residues 23–49, 54–80, 87–113, 175–201, 206–232, and 239–265; these read ARFRALFTLRGLGGPVAISWISRAFDD, LKHELAYCLGQMQDRRAIPVLLDVLRD, VRHEAGEALGAIGDPEVLEILKQYSTD, DRYRAMFALRDAGGKEAALALAEGLRC, FRHEIGYVLGQMQHEAAVPQLAAALAQ, and VRHECAEALGAIARPACLAALRAHVAD. 3 residues coordinate Fe cation: H56, H89, and E90. 3 residues coordinate Fe cation: H208, H241, and E242.

Belongs to the deoxyhypusine hydroxylase family. Requires Fe(2+) as cofactor.

The catalysed reaction is [eIF5A protein]-deoxyhypusine + AH2 + O2 = [eIF5A protein]-hypusine + A + H2O. It functions in the pathway protein modification; eIF5A hypusination. Functionally, catalyzes the hydroxylation of the N(6)-(4-aminobutyl)-L-lysine intermediate produced by deoxyhypusine synthase/DHPS on a critical lysine of the eukaryotic translation initiation factor 5A/eIF-5A. This is the second step of the post-translational modification of that lysine into an unusual amino acid residue named hypusine. Hypusination is unique to mature eIF-5A factor and is essential for its function. The chain is Deoxyhypusine hydroxylase from Bos taurus (Bovine).